The chain runs to 423 residues: Glucose-1-phosphate adenylyltransferase (423 aa).

Residues tyrosine 107, glycine 172, 187–188, and serine 205 each bind alpha-D-glucose 1-phosphate; that span reads EK.

This sequence belongs to the bacterial/plant glucose-1-phosphate adenylyltransferase family. In terms of assembly, homotetramer.

It carries out the reaction alpha-D-glucose 1-phosphate + ATP + H(+) = ADP-alpha-D-glucose + diphosphate. It functions in the pathway glycan biosynthesis; glycogen biosynthesis. Involved in the biosynthesis of ADP-glucose, a building block required for the elongation reactions to produce glycogen. Catalyzes the reaction between ATP and alpha-D-glucose 1-phosphate (G1P) to produce pyrophosphate and ADP-Glc. This is Glucose-1-phosphate adenylyltransferase from Albidiferax ferrireducens (strain ATCC BAA-621 / DSM 15236 / T118) (Rhodoferax ferrireducens).